A 162-amino-acid chain; its full sequence is MGLETEKADVQLFLDDESYSRHSGVDYADPEKFADAGLDRDPHRLNSHLKVGFEDVIAEPVSTHSFDKVWICSHALFEISKYVIYKFLTVFLAIPLAFVAGILFATLSCLHIWIIMPFVKTCLMLLPSVQTIWKSVTDVVIAPLCTSAGRSFSSVSLQLSHD.

Over 1–86 (MGLETEKADV…FEISKYVIYK (86 aa)) the chain is Cytoplasmic. Phosphotyrosine; by SRC is present on Tyr-19. A phosphoserine mark is found at Ser-20 and Ser-23. Residue Tyr-27 is modified to Phosphotyrosine; by SRC. An intramembrane region (helical) is located at residues 87–107 (FLTVFLAIPLAFVAGILFATL). The Cytoplasmic portion of the chain corresponds to 108-162 (SCLHIWIIMPFVKTCLMLLPSVQTIWKSVTDVVIAPLCTSAGRSFSSVSLQLSHD).

Belongs to the caveolin family. Monomer or homodimer. Interacts with CAV1; the interaction forms a stable heterooligomeric complex that is required for targeting to lipid rafts and for caveolae formation. Tyrosine phosphorylated forms do not form heterooligomers with the Tyr-19-phosphorylated form existing as a monomer or dimer, and the Tyr-27-form as a monomer only. Interacts (tyrosine phosphorylated form) with the SH2 domain-containing proteins, RASA1, NCK1 and SRC. Interacts (tyrosine phosphorylated form) with INSR, the interaction (Tyr-27-phosphorylated form) is increased on insulin stimulation. Interacts (Tyr-19 phosphorylated form) with MAPK1 (phosphorylated form); the interaction, promoted by insulin, leads to nuclear location and MAPK1 activation. Interacts with STAT3; the interaction is increased on insulin-induced tyrosine phosphorylation leading to STAT activation. Phosphorylated on serine and tyrosine residues. CAV1 promotes phosphorylation on Ser-23 which then targets the complex to the plasma membrane, lipid rafts and caveolae. Phosphorylation on both Tyr-19 and Tyr-27 is required for insulin-induced 'Ser-727' phosphorylation of STAT3 and its activation. Phosphorylation on Tyr-19 is required for insulin-induced phosphorylation of MAPK1 and DNA binding of STAT3. Tyrosine phosphorylation is induced by both EGF and insulin.

Its subcellular location is the nucleus. The protein localises to the cytoplasm. It is found in the golgi apparatus membrane. The protein resides in the cell membrane. It localises to the membrane. Its subcellular location is the caveola. In terms of biological role, may act as a scaffolding protein within caveolar membranes. Interacts directly with G-protein alpha subunits and can functionally regulate their activity. Acts as an accessory protein in conjunction with CAV1 in targeting to lipid rafts and driving caveolae formation. Positive regulator of cellular mitogenesis of the MAPK signaling pathway. Required for the insulin-stimulated nuclear translocation and activation of MAPK1 and STAT3, and the subsequent regulation of cell cycle progression. This chain is Caveolin-2 (CAV2), found in Equus caballus (Horse).